A 260-amino-acid chain; its full sequence is Tetraspanin-14 (260 aa).

Over Met-1–Asn-10 the chain is Cytoplasmic. The chain crosses the membrane as a helical span at residues Leu-11–His-31. Residues Ala-32–Arg-54 are Extracellular-facing. Residues Val-55–Phe-75 traverse the membrane as a helical segment. Residues Leu-76–Arg-80 are Cytoplasmic-facing. Residues Leu-81–Met-101 form a helical membrane-spanning segment. Topologically, residues Glu-102–Arg-260 are extracellular. An N-linked (GlcNAc...) asparagine glycan is attached at Asn-182.

The protein belongs to the tetraspanin (TM4SF) family.

Its subcellular location is the membrane. Its function is as follows. May be involved in the regulation of cell differentiation. This chain is Tetraspanin-14 (TET14), found in Arabidopsis thaliana (Mouse-ear cress).